A 385-amino-acid chain; its full sequence is 1-deoxy-D-xylulose 5-phosphate reductoisomerase (385 aa).

6 residues coordinate NADPH: Thr13, Gly14, Ser15, Ile16, Asn40, and Asn122. Lys123 provides a ligand contact to 1-deoxy-D-xylulose 5-phosphate. Glu124 provides a ligand contact to NADPH. Position 148 (Asp148) interacts with Mn(2+). The 1-deoxy-D-xylulose 5-phosphate site is built by Ser149, Glu150, Ser177, and His200. Glu150 contacts Mn(2+). An NADPH-binding site is contributed by Gly206. 4 residues coordinate 1-deoxy-D-xylulose 5-phosphate: Ser213, Asn218, Lys219, and Glu222. Glu222 serves as a coordination point for Mn(2+).

The protein belongs to the DXR family. Requires Mg(2+) as cofactor. The cofactor is Mn(2+).

The catalysed reaction is 2-C-methyl-D-erythritol 4-phosphate + NADP(+) = 1-deoxy-D-xylulose 5-phosphate + NADPH + H(+). The protein operates within isoprenoid biosynthesis; isopentenyl diphosphate biosynthesis via DXP pathway; isopentenyl diphosphate from 1-deoxy-D-xylulose 5-phosphate: step 1/6. In terms of biological role, catalyzes the NADPH-dependent rearrangement and reduction of 1-deoxy-D-xylulose-5-phosphate (DXP) to 2-C-methyl-D-erythritol 4-phosphate (MEP). This Francisella tularensis subsp. novicida (strain U112) protein is 1-deoxy-D-xylulose 5-phosphate reductoisomerase.